The sequence spans 585 residues: Adenine deaminase (585 aa).

It belongs to the metallo-dependent hydrolases superfamily. Adenine deaminase family. It depends on Mn(2+) as a cofactor.

It catalyses the reaction adenine + H2O + H(+) = hypoxanthine + NH4(+). This chain is Adenine deaminase, found in Halalkalibacterium halodurans (strain ATCC BAA-125 / DSM 18197 / FERM 7344 / JCM 9153 / C-125) (Bacillus halodurans).